Here is a 210-residue protein sequence, read N- to C-terminus: Large ribosomal subunit protein uL4 (210 aa).

The segment at His-49–Gly-76 is disordered. The span at Lys-63 to Gly-76 shows a compositional bias: basic residues.

Belongs to the universal ribosomal protein uL4 family. As to quaternary structure, part of the 50S ribosomal subunit.

Functionally, one of the primary rRNA binding proteins, this protein initially binds near the 5'-end of the 23S rRNA. It is important during the early stages of 50S assembly. It makes multiple contacts with different domains of the 23S rRNA in the assembled 50S subunit and ribosome. In terms of biological role, forms part of the polypeptide exit tunnel. This Thermodesulfovibrio yellowstonii (strain ATCC 51303 / DSM 11347 / YP87) protein is Large ribosomal subunit protein uL4.